Here is a 484-residue protein sequence, read N- to C-terminus: UDP-N-acetylmuramate--L-alanine ligase (484 aa).

128–134 (GTHGKTT) is a binding site for ATP.

Belongs to the MurCDEF family.

The protein resides in the cytoplasm. The enzyme catalyses UDP-N-acetyl-alpha-D-muramate + L-alanine + ATP = UDP-N-acetyl-alpha-D-muramoyl-L-alanine + ADP + phosphate + H(+). It participates in cell wall biogenesis; peptidoglycan biosynthesis. Its function is as follows. Cell wall formation. The chain is UDP-N-acetylmuramate--L-alanine ligase from Shewanella loihica (strain ATCC BAA-1088 / PV-4).